Consider the following 80-residue polypeptide: Acyl carrier protein (80 aa).

One can recognise a Carrier domain in the interval 2–77; it reads SEINQKVVDI…QVVEYLEKRL (76 aa). Residue Ser37 is modified to O-(pantetheine 4'-phosphoryl)serine.

The protein belongs to the acyl carrier protein (ACP) family. 4'-phosphopantetheine is transferred from CoA to a specific serine of apo-ACP by AcpS. This modification is essential for activity because fatty acids are bound in thioester linkage to the sulfhydryl of the prosthetic group.

The protein localises to the cytoplasm. It participates in lipid metabolism; fatty acid biosynthesis. Its function is as follows. Carrier of the growing fatty acid chain in fatty acid biosynthesis. This chain is Acyl carrier protein, found in Amoebophilus asiaticus (strain 5a2).